A 172-amino-acid chain; its full sequence is Ribosome maturation factor RimM (172 aa).

A PRC barrel domain is found at 96 to 168; it reads EGEFYYHQII…RVDVELMEGL (73 aa).

This sequence belongs to the RimM family. In terms of assembly, binds ribosomal protein uS19.

It localises to the cytoplasm. An accessory protein needed during the final step in the assembly of 30S ribosomal subunit, possibly for assembly of the head region. Essential for efficient processing of 16S rRNA. May be needed both before and after RbfA during the maturation of 16S rRNA. It has affinity for free ribosomal 30S subunits but not for 70S ribosomes. In Streptococcus pyogenes serotype M18 (strain MGAS8232), this protein is Ribosome maturation factor RimM.